A 114-amino-acid chain; its full sequence is Cholecystokinin (114 aa).

Residues 1 to 20 (MNGGLCLCVLMAVLAAGTLA) form the signal peptide. At Tyr-96 the chain carries Sulfotyrosine. Phe-102 carries the post-translational modification Phenylalanine amide. Residues 106 to 114 (SAEEYEYTS) constitute a propeptide that is removed on maturation. Sulfotyrosine is present on residues Tyr-110 and Tyr-112.

Belongs to the gastrin/cholecystokinin family. In terms of assembly, binds to CCK-A receptors in the pancreas and CCK-B receptors in the brain. Post-translationally, the precursor is cleaved by proteases to produce a number of active cholecystokinins. Brain contains CCK-octapeptide (CCK8) and several CCK-desoctapeptides; whereas pig gut contains intact CCK33, CCK39, and CCK58 as well as CCK-octapeptide and the CCK-desoctapeptides. Distribution differences are due to tissue-specific post-translational processing events. In terms of processing, the precursor is cleaved by ACE, which removes the Gly-Arg-Arg peptide at the C-terminus, leading to mature hormone. Synthesized in both cerebral cortex and duodenal mucosa.

Its subcellular location is the secreted. Its function is as follows. This peptide hormone induces gall bladder contraction and the release of pancreatic enzymes in the gut. Its function in the brain is not clear. Binding to CCK-A receptors stimulates amylase release from the pancreas, binding to CCK-B receptors stimulates gastric acid secretion. This is Cholecystokinin (CCK) from Sus scrofa (Pig).